The primary structure comprises 352 residues: Carbohydrate sulfotransferase 11 (352 aa).

At 1–16 (MKQTILDLMRMSRICR) the chain is on the cytoplasmic side. Residues 17-37 (MVLATCLGSFILVIFYFQSMF) traverse the membrane as a helical; Signal-anchor for type II membrane protein segment. At 38 to 352 (QPVMRRNPFA…YSIPSYLKLQ (315 aa)) the chain is on the lumenal side. Residues 124–130 (PKVACTN) and 186–194 (REPFERLVS) contribute to the 3'-phosphoadenylyl sulfate site. Residues Asn205, Asn223, Asn321, and Asn342 are each glycosylated (N-linked (GlcNAc...) asparagine).

This sequence belongs to the sulfotransferase 2 family.

The protein localises to the golgi apparatus membrane. The catalysed reaction is chondroitin beta-D-glucuronate + n 3'-phosphoadenylyl sulfate = chondroitin 4'-sulfate + n adenosine 3',5'-bisphosphate + n H(+). Its function is as follows. Catalyzes the transfer of sulfate to position 4 of the N-acetylgalactosamine (GalNAc) residue of chondroitin. The chain is Carbohydrate sulfotransferase 11 (chst11) from Danio rerio (Zebrafish).